The following is a 366-amino-acid chain: 5-hydroxytryptamine receptor 1F (366 aa).

The Extracellular segment spans residues 1–24; sequence MDFLNASDQNLTSEELLNRMPSKI. N-linked (GlcNAc...) asparagine glycosylation is found at Asn-5 and Asn-10. The chain crosses the membrane as a helical span at residues 25-49; that stretch reads LVSLTLSGLALMTTTINSLVIAAII. Residues 50 to 59 lie on the Cytoplasmic side of the membrane; sequence VTRKLHHPAN. The helical transmembrane segment at 60–81 threads the bilayer; the sequence is YLICSLAVTDFLVAVLVMPFSI. At 82–96 the chain is on the extracellular side; that stretch reads VYIVRESWIMGQVLC. Cys-96 and Cys-172 are disulfide-bonded. The helical transmembrane segment at 97–119 threads the bilayer; the sequence is DIWLSVDIICCTCSILHLSAIAL. Residues Asp-103 and Cys-107 each contribute to the serotonin site. The DRY motif; important for ligand-induced conformation changes motif lies at 120-122; that stretch reads DRY. The Cytoplasmic segment spans residues 120-139; sequence DRYRAITDAVEYARKRTPRH. The helical transmembrane segment at 140 to 159 threads the bilayer; the sequence is AGIMITIVWVISVFISMPPL. Over 160 to 178 the chain is Extracellular; that stretch reads FWRHQGTSRDDECVIKHDH. Residues 179 to 202 traverse the membrane as a helical segment; sequence IVSTIYSTFGAFYIPLVLILILYY. Over 203–291 the chain is Cytoplasmic; it reads KIYRAARTLY…KISGTRERKA (89 aa). The helical transmembrane segment at 292 to 315 threads the bilayer; the sequence is ATTLGLILGAFVICWLPFFVKELV. Over 316 to 327 the chain is Extracellular; the sequence is VNVCEKCKISEE. A helical membrane pass occupies residues 328 to 350; sequence MSNFLAWLGYLNSLINPLIYTIF. Residues 343–347 carry the NPxxY motif; important for ligand-induced conformation changes and signaling motif; that stretch reads NPLIY. Residues 351 to 366 are Cytoplasmic-facing; the sequence is NEDFKKAFQKLVRCRY.

It belongs to the G-protein coupled receptor 1 family. As to expression, detected in hippocampus.

It is found in the cell membrane. Functionally, G-protein coupled receptor for 5-hydroxytryptamine (serotonin). Also functions as a receptor for various alkaloids and psychoactive substances. Ligand binding causes a conformation change that triggers signaling via guanine nucleotide-binding proteins (G proteins) and modulates the activity of downstream effectors, such as adenylate cyclase. HTR1F is coupled to G(i)/G(o) G alpha proteins and mediates inhibitory neurotransmission by inhibiting adenylate cyclase activity. The sequence is that of 5-hydroxytryptamine receptor 1F (Htr1f) from Mus musculus (Mouse).